Reading from the N-terminus, the 309-residue chain is Porphobilinogen deaminase (309 aa).

C241 carries the post-translational modification S-(dipyrrolylmethanemethyl)cysteine.

It belongs to the HMBS family. Monomer. The cofactor is dipyrromethane.

The catalysed reaction is 4 porphobilinogen + H2O = hydroxymethylbilane + 4 NH4(+). Its pathway is porphyrin-containing compound metabolism; protoporphyrin-IX biosynthesis; coproporphyrinogen-III from 5-aminolevulinate: step 2/4. Functionally, tetrapolymerization of the monopyrrole PBG into the hydroxymethylbilane pre-uroporphyrinogen in several discrete steps. The chain is Porphobilinogen deaminase from Oceanobacillus iheyensis (strain DSM 14371 / CIP 107618 / JCM 11309 / KCTC 3954 / HTE831).